The primary structure comprises 1039 residues: FHIP family protein GG24907 (1039 aa).

Phosphoserine occurs at positions 498 and 805. Disordered regions lie at residues 831–877 (ATPT…SASS), 904–945 (GISQ…SNSS), and 957–984 (SNTTTHSASTLHGLDGGPSTGGFNSEPA). Composition is skewed to polar residues over residues 855 to 877 (TSMFSRKSASTSTTPPNGSSASS) and 904 to 924 (GISQAQTSAGTCETSLSTQPQ). Residues 925–945 (AGASRTGATATSAAASGSNSS) are compositionally biased toward low complexity. The segment covering 957-966 (SNTTTHSAST) has biased composition (polar residues).

Belongs to the FHIP family.

This Drosophila erecta (Fruit fly) protein is FHIP family protein GG24907.